The sequence spans 381 residues: 1-deoxy-D-xylulose 5-phosphate reductoisomerase (381 aa).

Residues T10, G11, S12, I13, G36, K37, N38, and N122 each contribute to the NADPH site. K123 serves as a coordination point for 1-deoxy-D-xylulose 5-phosphate. E124 is an NADPH binding site. D148 serves as a coordination point for Mn(2+). Positions 149, 150, 173, and 196 each coordinate 1-deoxy-D-xylulose 5-phosphate. E150 contributes to the Mn(2+) binding site. G202 is a binding site for NADPH. 4 residues coordinate 1-deoxy-D-xylulose 5-phosphate: S209, N214, K215, and E218. Residue E218 participates in Mn(2+) binding.

The protein belongs to the DXR family. The cofactor is Mg(2+). Mn(2+) is required as a cofactor.

It catalyses the reaction 2-C-methyl-D-erythritol 4-phosphate + NADP(+) = 1-deoxy-D-xylulose 5-phosphate + NADPH + H(+). It functions in the pathway isoprenoid biosynthesis; isopentenyl diphosphate biosynthesis via DXP pathway; isopentenyl diphosphate from 1-deoxy-D-xylulose 5-phosphate: step 1/6. In terms of biological role, catalyzes the NADPH-dependent rearrangement and reduction of 1-deoxy-D-xylulose-5-phosphate (DXP) to 2-C-methyl-D-erythritol 4-phosphate (MEP). This Desulfitobacterium hafniense (strain Y51) protein is 1-deoxy-D-xylulose 5-phosphate reductoisomerase.